The sequence spans 436 residues: Forkhead box protein I3 (436 aa).

Ser-132 is modified (phosphoserine). Residues 158 to 252 constitute a DNA-binding region (fork-head); sequence RPPYSYSALI…DNGNFRRKRK (95 aa). Positions 248 to 254 match the Nuclear localization signal motif; sequence RRKRKRR. Disordered regions lie at residues 249-319 and 340-410; these read RKRK…PGGS and SSSG…SGGQ. The span at 257 to 277 shows a compositional bias: low complexity; it reads ASSASTSTVAAGTTKSEEGLS. Residues 278–287 show a composition bias toward gly residues; it reads SGLGSGVGGK. 2 positions are modified to phosphoserine: Ser-292 and Ser-302. Residues 385-410 show a composition bias toward low complexity; it reads SNGASSGSGQRSSYYSPFPASTSGGQ. A 9aaTAD motif is present at residues 422–430; that stretch reads SMVNSLIYP.

In terms of processing, phosphorylation promotes the transcription factor activity. Dephosphorylation by protein phosphatase 2A (PP2A) reduces its activity.

The protein resides in the nucleus. Its function is as follows. Transcription factor required for pharyngeal arch development, and which is involved in hair, ear, jaw and dental development. May act as a pioneer transcription factor during pharyngeal arch development. Required for the development of the epithelium of hair and whisker placodes and that of teeth. Required for hair follicle stem cell specification. Acts downstream of TBX1 for the formation of the thymus and parathyroid glands from the third pharyngeal pouch. The sequence is that of Forkhead box protein I3 from Canis lupus familiaris (Dog).